The primary structure comprises 201 residues: MKRKNKKFTEIFIAFILGIAIGVLGYSDYGTDLINQFKISHTPPPKIKHYNISQLSRSKVSTCFTPPSGCTKFIADQIDTARESIYMHAYGMSDSLITAALIDAQARGVQVKILLDRSNLKQKFSKLHELQRAKIEVGIDKVPGIAHNKVIIIDKKKVITGSFNFTAAADKRNAENVIVIEDAELADSYLQNWLSRKARNG.

The signal sequence occupies residues 1-25 (MKRKNKKFTEIFIAFILGIAIGVLG). Positions 142–169 (VPGIAHNKVIIIDKKKVITGSFNFTAAA) constitute a PLD phosphodiesterase domain. Residues H147, K149, and D154 contribute to the active site.

This sequence belongs to the phospholipase D family. Homodimer.

It localises to the secreted. It catalyses the reaction a 1,2-diacyl-sn-glycero-3-phosphocholine + H2O = a 1,2-diacyl-sn-glycero-3-phosphate + choline + H(+). Functionally, could be a virulence factor. The sequence is that of Phospholipase D (pld) from Rickettsia bellii (strain RML369-C).